The following is a 274-amino-acid chain: MAEVLSAGPESVAGCRARAVHKVLNQVVLPGEELVLPDHEDVDGLGGAGEQPLRLNAGARPRLRVVCGPGLRRCGDRLLVTKCGRLRHKEPSGGGGGVYWVDSQQKRYVPVKGDHVIGIVIAKSGDIFKVDVGGSEPASLSYLAFEGATKRNRPNVQVGDLIYGQCVVANKDMEPEMVCIDSCGRANGMGVIGQDGLLFKVTLGLIRKLLAPDCEIVQELGKLYPLEIVFGMNGRIWVKAKTIQQTLILANVLEACEHMTTEQRKQIFARLAES.

Position 2 is an N-acetylalanine (A2). A Glycyl lysine isopeptide (Lys-Gly) (interchain with G-Cter in SUMO2) cross-link involves residue K150.

This sequence belongs to the RRP40 family. Component of the RNA exosome core complex (Exo-9), composed of EXOSC1, EXOSC2, EXOSC3, EXOSC4, EXOSC5, EXOSC6, EXOSC7, EXOSC8 and EXOSC9; within the complex interacts with EXOSC5 and EXOSC9. The catalytically inactive RNA exosome core complex (Exo-9) associates with the catalytic subunit EXOSC10/RRP6. Exo-9 may associate with DIS3 to form the nucleolar exosome complex, or DIS3L to form the cytoplasmic exosome complex. Exo-9 is formed by a hexameric base ring consisting of the heterodimers EXOSC4-EXOSC9, EXOSC5-EXOSC8 and EXOSC6-EXOSC7, and a cap ring consisting of EXOSC1, EXOSC2 and EXOSC3. The RNA exosome complex associates with cofactors C1D/RRP47, MPHOSPH6/MPP6 and MTREX/MTR4. Interacts with MPHOSPH6/MPP6; the interaction is direct. Interacts with GTPBP1. Interacts with ZC3HAV1. Interacts with DDX17 only in the presence of ZC3HAV1 in an RNA-independent manner. Interacts with DHX36; this interaction occurs in a RNase-insensitive manner. Interacts with HBS1L isoform 2.

It is found in the cytoplasm. The protein resides in the nucleus. Its subcellular location is the nucleolus. Non-catalytic component of the RNA exosome complex which has 3'-&gt;5' exoribonuclease activity and participates in a multitude of cellular RNA processing and degradation events. In the nucleus, the RNA exosome complex is involved in proper maturation of stable RNA species such as rRNA, snRNA and snoRNA, in the elimination of RNA processing by-products and non-coding 'pervasive' transcripts, such as antisense RNA species and promoter-upstream transcripts (PROMPTs), and of mRNAs with processing defects, thereby limiting or excluding their export to the cytoplasm. The RNA exosome may be involved in Ig class switch recombination (CSR) and/or Ig variable region somatic hypermutation (SHM) by targeting AICDA deamination activity to transcribed dsDNA substrates. In the cytoplasm, the RNA exosome complex is involved in general mRNA turnover and specifically degrades inherently unstable mRNAs containing AU-rich elements (AREs) within their 3' untranslated regions, and in RNA surveillance pathways, preventing translation of aberrant mRNAs. It seems to be involved in degradation of histone mRNA. The catalytic inactive RNA exosome core complex of 9 subunits (Exo-9) is proposed to play a pivotal role in the binding and presentation of RNA for ribonucleolysis, and to serve as a scaffold for the association with catalytic subunits and accessory proteins or complexes. EXOSC3 as peripheral part of the Exo-9 complex stabilizes the hexameric ring of RNase PH-domain subunits through contacts with EXOSC9 and EXOSC5. The chain is Exosome complex component RRP40 (Exosc3) from Mus musculus (Mouse).